Consider the following 283-residue polypeptide: Interferon alpha-inducible protein 27-like protein 2B (283 aa).

Residues 1–90 constitute a mitochondrion transit peptide; the sequence is MKRKFVGAAI…AVGTATGARA (90 aa). Positions 90 to 120 are disordered; sequence AEGSMGASREQESGPQDPPQELQEPQEPPSC. Helical transmembrane passes span 130-150, 176-196, and 202-222; these read FVGA…ALSA, GGGI…ILGL, and IILG…MGAC. The disordered stretch occupies residues 227-283; that stretch reads PGLQDLQQEPKEPQEPQELQKQQEPQEPQELQKQQETQETQETQELQKTQEPPSYEK. Positions 242–283 are enriched in low complexity; the sequence is PQELQKQQEPQEPQELQKQQETQETQETQELQKTQEPPSYEK.

It belongs to the IFI6/IFI27 family. Homooligomer. Interacts with BAK1. Interacts with BAX. Interacts with adenine nucleotide translocase.

The protein localises to the mitochondrion inner membrane. In terms of biological role, functions in the intrinsic apoptotic signaling pathway and may have an interferon-induced antiviral activity. In Mus musculus (Mouse), this protein is Interferon alpha-inducible protein 27-like protein 2B.